The sequence spans 249 residues: Green-light absorbing proteorhodopsin (249 aa).

A signal peptide spans methionine 1 to alanine 17. A run of 7 helical transmembrane segments spans residues glycine 30–valine 49, leucine 62–isoleucine 84, leucine 99–glycine 121, leucine 128–alanine 147, alanine 151–alanine 168, methionine 189–glycine 211, and leucine 221–valine 243. The residue at position 231 (lysine 231) is an N6-(retinylidene)lysine.

This sequence belongs to the archaeal/bacterial/fungal opsin family. In terms of processing, contains one covalently linked retinal chromophore.

The protein localises to the cell membrane. Functionally, light-driven proton pump that generates photothrophic energy. In Gamma-proteobacterium EBAC31A08, this protein is Green-light absorbing proteorhodopsin.